A 454-amino-acid polypeptide reads, in one-letter code: Bifunctional protein GlmU (454 aa).

The segment at 1 to 228 is pyrophosphorylase; the sequence is MSPLHVVILA…PFEVQGVNNR (228 aa). Residues 9-12, K23, Q74, 79-80, 101-103, G138, E153, N168, and N226 contribute to the UDP-N-acetyl-alpha-D-glucosamine site; these read LAAG, GT, and YGD. D103 is a binding site for Mg(2+). Residue N226 coordinates Mg(2+). Residues 229-249 form a linker region; sequence LQLAELERWYQRQQAERLMTE. The N-acetyltransferase stretch occupies residues 250 to 454; it reads GASLADPARI…IAGWERPKKA (205 aa). Residues R332 and K350 each contribute to the UDP-N-acetyl-alpha-D-glucosamine site. Residue H362 is the Proton acceptor of the active site. Positions 365 and 376 each coordinate UDP-N-acetyl-alpha-D-glucosamine. Residues A379, 385 to 386, S404, A422, and R439 contribute to the acetyl-CoA site; that span reads NY.

The protein in the N-terminal section; belongs to the N-acetylglucosamine-1-phosphate uridyltransferase family. This sequence in the C-terminal section; belongs to the transferase hexapeptide repeat family. In terms of assembly, homotrimer. It depends on Mg(2+) as a cofactor.

It localises to the cytoplasm. It carries out the reaction alpha-D-glucosamine 1-phosphate + acetyl-CoA = N-acetyl-alpha-D-glucosamine 1-phosphate + CoA + H(+). The enzyme catalyses N-acetyl-alpha-D-glucosamine 1-phosphate + UTP + H(+) = UDP-N-acetyl-alpha-D-glucosamine + diphosphate. Its pathway is nucleotide-sugar biosynthesis; UDP-N-acetyl-alpha-D-glucosamine biosynthesis; N-acetyl-alpha-D-glucosamine 1-phosphate from alpha-D-glucosamine 6-phosphate (route II): step 2/2. It functions in the pathway nucleotide-sugar biosynthesis; UDP-N-acetyl-alpha-D-glucosamine biosynthesis; UDP-N-acetyl-alpha-D-glucosamine from N-acetyl-alpha-D-glucosamine 1-phosphate: step 1/1. It participates in bacterial outer membrane biogenesis; LPS lipid A biosynthesis. Functionally, catalyzes the last two sequential reactions in the de novo biosynthetic pathway for UDP-N-acetylglucosamine (UDP-GlcNAc). The C-terminal domain catalyzes the transfer of acetyl group from acetyl coenzyme A to glucosamine-1-phosphate (GlcN-1-P) to produce N-acetylglucosamine-1-phosphate (GlcNAc-1-P), which is converted into UDP-GlcNAc by the transfer of uridine 5-monophosphate (from uridine 5-triphosphate), a reaction catalyzed by the N-terminal domain. The protein is Bifunctional protein GlmU of Marinobacter nauticus (strain ATCC 700491 / DSM 11845 / VT8) (Marinobacter aquaeolei).